The primary structure comprises 427 residues: Adenylosuccinate synthetase (427 aa).

GTP contacts are provided by residues 12–18 (GDEGKGK) and 40–42 (GHT). Asp-13 serves as the catalytic Proton acceptor. Residues Asp-13 and Gly-40 each contribute to the Mg(2+) site. IMP contacts are provided by residues 13 to 16 (DEGK), 38 to 41 (NAGH), Thr-128, Arg-142, Gln-223, Thr-238, and Arg-302. His-41 functions as the Proton donor in the catalytic mechanism. Residue 298–304 (TTTGRPR) participates in substrate binding. Residues Arg-304, 330–332 (KLD), and 412–414 (AVG) each bind GTP.

It belongs to the adenylosuccinate synthetase family. Homodimer. It depends on Mg(2+) as a cofactor.

The protein localises to the cytoplasm. It catalyses the reaction IMP + L-aspartate + GTP = N(6)-(1,2-dicarboxyethyl)-AMP + GDP + phosphate + 2 H(+). It participates in purine metabolism; AMP biosynthesis via de novo pathway; AMP from IMP: step 1/2. Functionally, plays an important role in the de novo pathway of purine nucleotide biosynthesis. Catalyzes the first committed step in the biosynthesis of AMP from IMP. In Heliobacterium modesticaldum (strain ATCC 51547 / Ice1), this protein is Adenylosuccinate synthetase.